A 475-amino-acid chain; its full sequence is Ribulose bisphosphate carboxylase large chain (475 aa).

A propeptide spanning residues 1-2 is cleaved from the precursor; sequence MS. Position 3 is an N-acetylproline (Pro3). Residue Lys14 is modified to N6,N6,N6-trimethyllysine. The substrate site is built by Asn123 and Thr173. Lys175 serves as the catalytic Proton acceptor. Lys177 lines the substrate pocket. Mg(2+) contacts are provided by Lys201, Asp203, and Glu204. At Lys201 the chain carries N6-carboxylysine. The Proton acceptor role is filled by His294. Substrate contacts are provided by Arg295, His327, and Ser379.

It belongs to the RuBisCO large chain family. Type I subfamily. As to quaternary structure, heterohexadecamer of 8 large chains and 8 small chains. It depends on Mg(2+) as a cofactor.

The protein localises to the plastid. It localises to the chloroplast. It catalyses the reaction 2 (2R)-3-phosphoglycerate + 2 H(+) = D-ribulose 1,5-bisphosphate + CO2 + H2O. The enzyme catalyses D-ribulose 1,5-bisphosphate + O2 = 2-phosphoglycolate + (2R)-3-phosphoglycerate + 2 H(+). Its function is as follows. RuBisCO catalyzes two reactions: the carboxylation of D-ribulose 1,5-bisphosphate, the primary event in carbon dioxide fixation, as well as the oxidative fragmentation of the pentose substrate in the photorespiration process. Both reactions occur simultaneously and in competition at the same active site. This Bazzania trilobata (Greater whipwort) protein is Ribulose bisphosphate carboxylase large chain.